Consider the following 239-residue polypeptide: MATPHINAEMGDFADVVLMPGDPLRAKHIAETFLEDVREVNNVRGMLGFTGTYKGRKISVMGHGMGIPSCSIYTKELITDFGVKKIIRVGSCGAVRMDVKLRDVVIGMGACTDSKVNRIRFKDHDFAAIADFDMVRNAVDAAKALGVDARVGNLFSADLFYSPDGDMFDVMEKYGILGVEMEAAGIYGVAAEFGAKALTICTVSDHIRTHEQTTAAERQTTFNDMIKIALESVLLGDKE.

His-5 serves as a coordination point for a purine D-ribonucleoside. Phosphate is bound by residues Gly-21, Arg-25, Arg-44, and 88-91; that span reads RVGS. A purine D-ribonucleoside-binding positions include 180–182 and 204–205; these read EME and SD. Catalysis depends on Asp-205, which acts as the Proton donor.

The protein belongs to the PNP/UDP phosphorylase family. Homohexamer; trimer of homodimers.

It carries out the reaction a purine D-ribonucleoside + phosphate = a purine nucleobase + alpha-D-ribose 1-phosphate. The catalysed reaction is a purine 2'-deoxy-D-ribonucleoside + phosphate = a purine nucleobase + 2-deoxy-alpha-D-ribose 1-phosphate. Its function is as follows. Catalyzes the reversible phosphorolytic breakdown of the N-glycosidic bond in the beta-(deoxy)ribonucleoside molecules, with the formation of the corresponding free purine bases and pentose-1-phosphate. The protein is Purine nucleoside phosphorylase DeoD-type of Salmonella arizonae (strain ATCC BAA-731 / CDC346-86 / RSK2980).